The following is a 608-amino-acid chain: Actin-interacting protein 1 (608 aa).

11 WD repeats span residues 62 to 101 (EHSC…HLLK), 106 to 149 (PIAG…GEIS), 150 to 190 (GQSK…FKMT), 193 to 232 (DHSR…LVGE), 237 to 276 (AHKG…LVSE), 323 to 362 (GHNK…NDRI), 366 to 403 (GHGN…YTDY), 444 to 483 (PIKY…LEPK), 487 to 526 (DHLG…PAHN), 531 to 570 (FHSA…KHTI), and 575 to 607 (HPQS…HVEN).

This sequence belongs to the WD repeat AIP1 family. In terms of tissue distribution, expressed in pupal wing cells.

Its subcellular location is the cytoplasm. The protein localises to the cytoskeleton. Induces disassembly of actin filaments in conjunction with ADF/cofilin family proteins. Together with GMF, promotes Arp2/3-nucleated actin filament array disassembly. Essential for organismal and cell viability. Required for the development of normal wing cell planar polarity. In egg chambers and together with GMF, plays an important role in directional migration of border cell clusters. The chain is Actin-interacting protein 1 (flr) from Drosophila melanogaster (Fruit fly).